The primary structure comprises 104 residues: uncharacterized protein (104 aa).

Positions 24–69 (VIKQIIEKYNDKVKELDTLKNQYQNLQQDYENLKQQVSLQRQTMIS) form a coiled coil.

This is an uncharacterized protein from Acanthamoeba polyphaga mimivirus (APMV).